The sequence spans 123 residues: Ribosome-binding factor A (123 aa).

It belongs to the RbfA family. In terms of assembly, monomer. Binds 30S ribosomal subunits, but not 50S ribosomal subunits or 70S ribosomes.

The protein resides in the cytoplasm. Functionally, one of several proteins that assist in the late maturation steps of the functional core of the 30S ribosomal subunit. Associates with free 30S ribosomal subunits (but not with 30S subunits that are part of 70S ribosomes or polysomes). Required for efficient processing of 16S rRNA. May interact with the 5'-terminal helix region of 16S rRNA. This is Ribosome-binding factor A from Legionella pneumophila (strain Paris).